Here is a 363-residue protein sequence, read N- to C-terminus: Small ribosomal subunit biogenesis GTPase RsgA (363 aa).

In terms of domain architecture, CP-type G spans 112-268 (HQQVIAANID…LIDTPGMREL (157 aa)). GTP is bound by residues 157-160 (TKAD) and 210-218 (GSSGAGKST). The Zn(2+) site is built by cysteine 291, cysteine 296, histidine 298, and cysteine 304. A disordered region spans residues 340–363 (RVAQNNRGKGSGKRPASIDRPGRR).

The protein belongs to the TRAFAC class YlqF/YawG GTPase family. RsgA subfamily. In terms of assembly, monomer. Associates with 30S ribosomal subunit, binds 16S rRNA. It depends on Zn(2+) as a cofactor.

Its subcellular location is the cytoplasm. One of several proteins that assist in the late maturation steps of the functional core of the 30S ribosomal subunit. Helps release RbfA from mature subunits. May play a role in the assembly of ribosomal proteins into the subunit. Circularly permuted GTPase that catalyzes slow GTP hydrolysis, GTPase activity is stimulated by the 30S ribosomal subunit. In Xanthomonas oryzae pv. oryzae (strain PXO99A), this protein is Small ribosomal subunit biogenesis GTPase RsgA.